The following is a 597-amino-acid chain: Arginine--tRNA ligase (597 aa).

Residues 125–135 (PNTNKPLHLGH) carry the 'HIGH' region motif.

This sequence belongs to the class-I aminoacyl-tRNA synthetase family. As to quaternary structure, monomer.

The protein resides in the cytoplasm. The catalysed reaction is tRNA(Arg) + L-arginine + ATP = L-arginyl-tRNA(Arg) + AMP + diphosphate. This chain is Arginine--tRNA ligase, found in Parabacteroides distasonis (strain ATCC 8503 / DSM 20701 / CIP 104284 / JCM 5825 / NCTC 11152).